Here is a 648-residue protein sequence, read N- to C-terminus: 1-deoxy-D-xylulose-5-phosphate synthase (648 aa).

Thiamine diphosphate is bound by residues His72 and 113 to 115; that span reads GHA. Position 144 (Asp144) interacts with Mg(2+). Thiamine diphosphate-binding positions include 145–146, Asn173, and Glu363; that span reads GA. Asn173 lines the Mg(2+) pocket.

It belongs to the transketolase family. DXPS subfamily. In terms of assembly, homodimer. Mg(2+) is required as a cofactor. Requires thiamine diphosphate as cofactor.

The enzyme catalyses D-glyceraldehyde 3-phosphate + pyruvate + H(+) = 1-deoxy-D-xylulose 5-phosphate + CO2. It functions in the pathway metabolic intermediate biosynthesis; 1-deoxy-D-xylulose 5-phosphate biosynthesis; 1-deoxy-D-xylulose 5-phosphate from D-glyceraldehyde 3-phosphate and pyruvate: step 1/1. Functionally, catalyzes the acyloin condensation reaction between C atoms 2 and 3 of pyruvate and glyceraldehyde 3-phosphate to yield 1-deoxy-D-xylulose-5-phosphate (DXP). This Symbiobacterium thermophilum (strain DSM 24528 / JCM 14929 / IAM 14863 / T) protein is 1-deoxy-D-xylulose-5-phosphate synthase.